Reading from the N-terminus, the 158-residue chain is Scytalone dehydratase-like protein CPUR_05428 (158 aa).

Substrate contacts are provided by Y24 and Y44. Catalysis depends on residues H79 and H104.

It belongs to the scytalone dehydratase family.

It functions in the pathway pigment biosynthesis. Scytalone dehydratase-like protein; part of the ergochrome gene cluster responsible for the typical purple-black color of the ergot sclerotia. The ergochrome gene cluster produces several ergot pigments including the yellow ergochrome secalonic acid and its derivatives, as well as the red anthraquinones endocrocin and clavorubin. The pathway begins with the synthesis of atrochrysone thioester by the polyketide synthase (PKS) CPUR_05437. The atrochrysone carboxyl ACP thioesterase CPUR_05436 then breaks the thioester bond and releases the atrochrysone carboxylic acid from CPUR_05437. The atrochrysone carboxylic acid is then converted to atrochrysone which is further transformed into emodin anthrone. The next step is performed by the anthrone oxygenase CPUR_05434 that catalyzes the oxidation of emodinanthrone to emodin. Emodin is further modified to yield monodictyphenone via several steps involving CPUR_05427, CPUR_05428, CPUR_05429 and CPUR_05430. The short chain dehydrogenase/reductase CPUR_05418 then catalyzes the C-5 ketoreduction to give the xanthone skeleton of the monomeric units. Ergochromes formation requires further dimerization steps of different xanthone units, probably catalyzed by the cytochrome P450 monooxygenase CPUR_05419. CPUR_05425, CPUR_05426 and CPUR_05431 are unique to Claviceps, thus it is likely that they are involved in further modification of xanthone units or in their dimerization. The yellow ergochromes and the red anthraquinone pigments endocrocin and clavorubin are products from the same PKS derived precursors and the latter are likely shunt products in the pathway of xanthone biosynthesis. It is proposed that atrochrysone carboxylic acid released from the PKS CPUR_05437 can also be converted to endocrocin anthrone which is further oxidized into endocrocin by CPUR_05435. Endocrocin could be then modified to clavorubin, possibly by CPUR_05423 and CPUR_05431. Clavorubin is the principal anthraquinone metabolite produced by the cluster with a much higher yield compared to endocrocin. The sequence is that of Scytalone dehydratase-like protein CPUR_05428 from Claviceps purpurea (strain 20.1) (Ergot fungus).